The sequence spans 347 residues: Epimerase family protein SDR39U1 homolog, chloroplastic (347 aa).

A chloroplast-targeting transit peptide spans 1–37; sequence MELLCSPTSLSSSFALSSALLVPRSFSMPGTRRFMVL. NADP(+) contacts are provided by residues 54-57, 76-77, 115-119, and arginine 136; these read TGFI, TR, and LAGLP.

As to quaternary structure, can form homodimers. Expressed in leaves, stems and flower buds.

It localises to the plastid. Its subcellular location is the chloroplast inner membrane. It is found in the chloroplast. Putative NADP-dependent oxidoreductase that acts as a positive regulator of chloroplast division. May play a role at an early stage of the division process. The protein is Epimerase family protein SDR39U1 homolog, chloroplastic of Arabidopsis thaliana (Mouse-ear cress).